Consider the following 340-residue polypeptide: Phosphate carrier protein, mitochondrial (340 aa).

Residues 1–27 constitute a mitochondrion transit peptide; sequence MSVFSQLAESSKQNPFSLPVRSGNCAS. 3 Solcar repeats span residues 41 to 125, 138 to 222, and 239 to 317; these read KYYA…FKNV, YRTS…TVEA, and EQLV…VKVA. 6 helical membrane passes run 47–67, 95–114, 141–161, 200–220, 241–261, and 297–317; these read ALGGVLSCGITHTAIVPLDLV, RALVKGWAPTLLGYSAQGLG, SLYLAASASAEFFADILLAPM, PLWMRQIPYTMMKFACFEKTV, LVVTFVAGYIAGVFCAIVSHP, and IIMIGTLTALQWFIYDSVKVA.

The protein belongs to the mitochondrial carrier (TC 2.A.29) family.

It is found in the mitochondrion inner membrane. In terms of biological role, transport of phosphate groups from the cytosol to the mitochondrial matrix. The protein is Phosphate carrier protein, mitochondrial of Caenorhabditis elegans.